Consider the following 274-residue polypeptide: 3-methyl-2-oxobutanoate hydroxymethyltransferase (274 aa).

Residues Asp-49 and Asp-88 each coordinate Mg(2+). 3-methyl-2-oxobutanoate-binding positions include 49–50 (DS), Asp-88, and Lys-118. Glu-120 contributes to the Mg(2+) binding site. Glu-187 serves as the catalytic Proton acceptor.

The protein belongs to the PanB family. Homodecamer; pentamer of dimers. Mg(2+) is required as a cofactor.

Its subcellular location is the cytoplasm. The enzyme catalyses 3-methyl-2-oxobutanoate + (6R)-5,10-methylene-5,6,7,8-tetrahydrofolate + H2O = 2-dehydropantoate + (6S)-5,6,7,8-tetrahydrofolate. The protein operates within cofactor biosynthesis; (R)-pantothenate biosynthesis; (R)-pantoate from 3-methyl-2-oxobutanoate: step 1/2. Catalyzes the reversible reaction in which hydroxymethyl group from 5,10-methylenetetrahydrofolate is transferred onto alpha-ketoisovalerate to form ketopantoate. This is 3-methyl-2-oxobutanoate hydroxymethyltransferase from Rhodopseudomonas palustris (strain ATCC BAA-98 / CGA009).